The primary structure comprises 204 residues: Ribonuclease HII (204 aa).

The region spanning 1–197 (MILGIDEAGR…KNRILNPKLL (197 aa)) is the RNase H type-2 domain. 3 residues coordinate a divalent metal cation: Asp-6, Glu-7, and Asp-103.

Belongs to the RNase HII family. Requires Mn(2+) as cofactor. It depends on Mg(2+) as a cofactor.

The protein resides in the cytoplasm. It carries out the reaction Endonucleolytic cleavage to 5'-phosphomonoester.. Functionally, endonuclease that specifically degrades the RNA of RNA-DNA hybrids. The protein is Ribonuclease HII of Helicobacter pylori (strain Shi470).